The following is a 160-amino-acid chain: Major pollen allergen Car b 1 isoforms 1A and 1B (160 aa).

The protein belongs to the BetVI family.

The protein is Major pollen allergen Car b 1 isoforms 1A and 1B of Carpinus betulus (European hornbeam).